The sequence spans 234 residues: Large ribosomal subunit protein uL1 (234 aa).

It belongs to the universal ribosomal protein uL1 family. In terms of assembly, part of the 50S ribosomal subunit.

Its function is as follows. Binds directly to 23S rRNA. The L1 stalk is quite mobile in the ribosome, and is involved in E site tRNA release. In terms of biological role, protein L1 is also a translational repressor protein, it controls the translation of the L11 operon by binding to its mRNA. The protein is Large ribosomal subunit protein uL1 of Baumannia cicadellinicola subsp. Homalodisca coagulata.